Here is a 241-residue protein sequence, read N- to C-terminus: Demethylmenaquinone methyltransferase (241 aa).

S-adenosyl-L-methionine is bound by residues threonine 68, aspartate 88, and 114-115 (DA).

This sequence belongs to the class I-like SAM-binding methyltransferase superfamily. MenG/UbiE family.

The catalysed reaction is a 2-demethylmenaquinol + S-adenosyl-L-methionine = a menaquinol + S-adenosyl-L-homocysteine + H(+). It functions in the pathway quinol/quinone metabolism; menaquinone biosynthesis; menaquinol from 1,4-dihydroxy-2-naphthoate: step 2/2. Functionally, methyltransferase required for the conversion of demethylmenaquinol (DMKH2) to menaquinol (MKH2). In Deinococcus radiodurans (strain ATCC 13939 / DSM 20539 / JCM 16871 / CCUG 27074 / LMG 4051 / NBRC 15346 / NCIMB 9279 / VKM B-1422 / R1), this protein is Demethylmenaquinone methyltransferase.